The sequence spans 287 residues: Anthocyanidin 3-O-glucosyltransferase 7 (287 aa).

The UDP-alpha-D-glucose site is built by A162, Q164, H179, W182, N183, S184, and E187. G202 is a binding site for an anthocyanidin. Positions 203 and 204 each coordinate UDP-alpha-D-glucose.

The protein belongs to the UDP-glycosyltransferase family. In terms of tissue distribution, expressed in cotyledons, hypocotyls, roots and leaves.

The catalysed reaction is an anthocyanidin + UDP-alpha-D-glucose + H(+) = an anthocyanidin 3-O-beta-D-glucoside + UDP. Its pathway is pigment biosynthesis; anthocyanin biosynthesis. Its function is as follows. In the presence of other necessary color factors, this glycosylation reaction allows the accumulation of anthocyanin pigments. This is Anthocyanidin 3-O-glucosyltransferase 7 (GT7) from Manihot esculenta (Cassava).